A 99-amino-acid chain; its full sequence is Large ribosomal subunit protein uL23 (99 aa).

The protein belongs to the universal ribosomal protein uL23 family. Part of the 50S ribosomal subunit. Contacts protein L29, and trigger factor when it is bound to the ribosome.

In terms of biological role, one of the early assembly proteins it binds 23S rRNA. One of the proteins that surrounds the polypeptide exit tunnel on the outside of the ribosome. Forms the main docking site for trigger factor binding to the ribosome. The sequence is that of Large ribosomal subunit protein uL23 from Blochmanniella floridana.